Here is an 81-residue protein sequence, read N- to C-terminus: MKPNIHPKTYQVIFQDVNSGYRFLSRSTKTSDETAEWEDGKTYPVIKVEVSSDTHPFYTGRQKFNERGGRVEQFKKRFNMD.

It belongs to the bacterial ribosomal protein bL31 family. Type B subfamily. As to quaternary structure, part of the 50S ribosomal subunit.

This is Large ribosomal subunit protein bL31B from Bacillus licheniformis (strain ATCC 14580 / DSM 13 / JCM 2505 / CCUG 7422 / NBRC 12200 / NCIMB 9375 / NCTC 10341 / NRRL NRS-1264 / Gibson 46).